We begin with the raw amino-acid sequence, 110 residues long: UPF0122 protein SP70585_1353 (110 aa).

It belongs to the UPF0122 family.

Its function is as follows. Might take part in the signal recognition particle (SRP) pathway. This is inferred from the conservation of its genetic proximity to ftsY/ffh. May be a regulatory protein. The sequence is that of UPF0122 protein SP70585_1353 from Streptococcus pneumoniae (strain 70585).